The sequence spans 219 residues: HTH-type transcriptional regulator LutR (219 aa).

Residues 1 to 56 (MIKNGELKPGDKLDSVQALAESFQVSRSAVREALSALKAMGLVEMKQGEGTYLKEF) form the HTH gntR-type domain. Residues 16-35 (VQALAESFQVSRSAVREALS) constitute a DNA-binding region (H-T-H motif).

Negatively regulates the transcription of the lutABC operon, which is required for L-lactate utilization. LutR activity is regulated by lactate, since presence of L-lactate, that probably binds to LutR, leads to derepression of the operon. Also appears to be essential for bacilysin biosynthesis. The polypeptide is HTH-type transcriptional regulator LutR (lutR) (Bacillus subtilis (strain 168)).